Reading from the N-terminus, the 620-residue chain is Chaperone protein HscA homolog (620 aa).

It belongs to the heat shock protein 70 family.

Chaperone involved in the maturation of iron-sulfur cluster-containing proteins. Has a low intrinsic ATPase activity which is markedly stimulated by HscB. The polypeptide is Chaperone protein HscA homolog (Acinetobacter baumannii (strain SDF)).